The sequence spans 118 residues: Myotrophin (118 aa).

ANK repeat units lie at residues 1 to 30 (MGDKEFVWAIKNGDLDAVKEFVLGGEDVNR), 34 to 65 (GGRKPMHYAADCGQDEVLEFLLSKGANINAAD), and 67 to 98 (HGITPLLSACYEGHRKCVELLLSKGADKTVKG).

It belongs to the myotrophin family.

It is found in the cytoplasm. Its subcellular location is the nucleus. The protein resides in the perinuclear region. Its function is as follows. Regulates NF-kappa-B transcription factor activity. Promotes growth of cardiomyocytes, but not cardiomyocyte proliferation. Promotes cardiac muscle hypertrophy. Plays a role in the regulation of the growth of actin filaments. Inhibits the activity of the F-actin-capping protein complex. The sequence is that of Myotrophin (mtpn) from Xenopus tropicalis (Western clawed frog).